Reading from the N-terminus, the 529-residue chain is Bifunctional purine biosynthesis protein PurH (529 aa).

The MGS-like domain maps to 1 to 148; it reads MQQRRPVRRA…KNHKDVAIVV (148 aa).

The protein belongs to the PurH family.

It catalyses the reaction (6R)-10-formyltetrahydrofolate + 5-amino-1-(5-phospho-beta-D-ribosyl)imidazole-4-carboxamide = 5-formamido-1-(5-phospho-D-ribosyl)imidazole-4-carboxamide + (6S)-5,6,7,8-tetrahydrofolate. It carries out the reaction IMP + H2O = 5-formamido-1-(5-phospho-D-ribosyl)imidazole-4-carboxamide. Its pathway is purine metabolism; IMP biosynthesis via de novo pathway; 5-formamido-1-(5-phospho-D-ribosyl)imidazole-4-carboxamide from 5-amino-1-(5-phospho-D-ribosyl)imidazole-4-carboxamide (10-formyl THF route): step 1/1. The protein operates within purine metabolism; IMP biosynthesis via de novo pathway; IMP from 5-formamido-1-(5-phospho-D-ribosyl)imidazole-4-carboxamide: step 1/1. The polypeptide is Bifunctional purine biosynthesis protein PurH (Salmonella paratyphi A (strain ATCC 9150 / SARB42)).